A 440-amino-acid polypeptide reads, in one-letter code: MVRISEDLIRRRAEHNNGEIFSLEELSLHQQDIQRIEHIHKWCRDLKILYLQNNLIPKIENVGRLKKLEYLNLALNNIEVIENLEGCESLQKLDLTVNFVGRLSSVETLKHNLHLKELYLVGNPCAEYQGYRQYVVATVPQLQSLDGKEISRAERIQALQELDAVRTRVLQQETKYLEEREKQKSNANEHPEINQSLSESQNGTQQYPESSSKTHTEAEDEEREFWEKPCPFTPESRLEAHRHLEEKRRANEKEKEKPKTKTPRTLITPDGRVLNVNEPKLDFSLFEDENNCLLLDLHVYRHMDSSLLDVDVQPMYVRVTVKGKVFQLVLPAEVKPDSSSAQRSQTTGHLLLILPLANEDVKPKKRTIRPTSVTSNQNNKKDTRAAPRRELLEVDPGLAGSLANIVPKGQESSHNPQRCGLEERPVSKDFVDDPEVPPLM.

LRR repeat units follow at residues 20–43, 44–65, 66–89, and 90–110; these read IFSL…HKWC, RDLK…VGRL, KKLE…GCES, and LQKL…ETLK. The region spanning 128–146 is the LRRCT domain; that stretch reads YQGYRQYVVATVPQLQSLD. Positions 178–192 are enriched in basic and acidic residues; sequence EEREKQKSNANEHPE. Disordered stretches follow at residues 178-267 and 363-440; these read EERE…RTLI and PKKR…PPLM. Residues 193-211 show a composition bias toward polar residues; that stretch reads INQSLSESQNGTQQYPESS. The span at 236–259 shows a compositional bias: basic and acidic residues; that stretch reads SRLEAHRHLEEKRRANEKEKEKPK. Residues 276–374 form the CS domain; that stretch reads VNEPKLDFSL…KRTIRPTSVT (99 aa). A compositionally biased stretch (polar residues) spans 369-378; that stretch reads RPTSVTSNQN. Composition is skewed to basic and acidic residues over residues 379 to 392 and 420 to 431; these read NKKD…RELL and GLEERPVSKDFV.

The protein belongs to the tilB family. Interacts with dvl2. Interacts with kur. Expressed in kinocilia of hair cells.

It localises to the cytoplasm. The protein resides in the dynein axonemal particle. Its subcellular location is the cell projection. It is found in the cilium. Plays a crucial role in regulating cilia motility in pronephric tubules, cloaca and neural tube. Required for establishing left-right asymmetry of the body plan; controls cell fate and convergent extension (CE) movements during gastrulation, respectively, via the Wnt and the planar cell polarity (PCP) signaling pathways. Required for the proper development of renal glomeruli and tubules. In Danio rerio (Zebrafish), this protein is Dynein axonemal assembly factor 11 (dnaaf11).